The sequence spans 44 residues: Unknown protein 9 (44 aa).

This chain is Unknown protein 9, found in Pseudotsuga menziesii (Douglas-fir).